Reading from the N-terminus, the 508-residue chain is MTTTPKPLVLMILDGFGHSDSPESNAVYAAKKPVLDRLWATVPNGLISGSGMDVGLPDGQMGNSEVGHMNLGAGRVVYQDFTRVTKAIRDGEFFENPTICAAVDKAVAAGKAVHFMGLLSDGGVHSHQDHLIAMAELAFKRGAEKIYLHAFLDGRDTPPKSAASSIELLDATFQALGKGRIASLIGRYYAMDRDNRWDRVAQAYNLIVDGKGEINAATAQEGLEAAYARGESDEFVKATSIGEPVKVEDGDAVVFMNFRADRARELSRVFVEDGFKEFERARQPKVQYVGLTQYAESIPAPAAFAPGSLENVLGDYLAKNGKTQLRIAETEKYAHVTFFFSGGREEPFPGEERILIPSPKVATYDLQPEMSAPEVTDRIVEAIENQRYDVIVVNYANGDMVGHSGVFEAAVKAVECLDTCVGRIVEALEKVGGEALITADHGNVEQMADESTGQAHTAHTTEPVPFIYVGKRDLKVREGGVLADVAPTMLKLLGLEKPAEMTGTSILV.

Aspartate 14 and serine 64 together coordinate Mn(2+). Residue serine 64 is the Phosphoserine intermediate of the active site. Residues histidine 125, 155–156 (RD), arginine 187, arginine 193, 259–262 (RADR), and lysine 332 each bind substrate. The Mn(2+) site is built by aspartate 399, histidine 403, aspartate 440, histidine 441, and histidine 459.

This sequence belongs to the BPG-independent phosphoglycerate mutase family. As to quaternary structure, monomer. Requires Mn(2+) as cofactor.

It catalyses the reaction (2R)-2-phosphoglycerate = (2R)-3-phosphoglycerate. It participates in carbohydrate degradation; glycolysis; pyruvate from D-glyceraldehyde 3-phosphate: step 3/5. Catalyzes the interconversion of 2-phosphoglycerate and 3-phosphoglycerate. This is 2,3-bisphosphoglycerate-independent phosphoglycerate mutase from Pseudomonas fluorescens (strain Pf0-1).